The chain runs to 184 residues: GMP synthase [glutamine-hydrolyzing] subunit A (184 aa).

The Glutamine amidotransferase type-1 domain occupies 3–184 (PICVVNNYGQ…YENFDAICTE (182 aa)). Cys-75 acts as the Nucleophile in catalysis. Active-site residues include His-162 and Glu-164.

Heterodimer composed of a glutamine amidotransferase subunit (A) and a GMP-binding subunit (B).

The enzyme catalyses XMP + L-glutamine + ATP + H2O = GMP + L-glutamate + AMP + diphosphate + 2 H(+). The protein operates within purine metabolism; GMP biosynthesis; GMP from XMP (L-Gln route): step 1/1. Its function is as follows. Catalyzes the synthesis of GMP from XMP. This is GMP synthase [glutamine-hydrolyzing] subunit A from Methanoregula boonei (strain DSM 21154 / JCM 14090 / 6A8).